We begin with the raw amino-acid sequence, 453 residues long: Kynureninase (453 aa).

Residues Leu111, Thr112, 139 to 142 (FPSD), Ser196, Asp226, His229, and Tyr251 each bind pyridoxal 5'-phosphate. Position 252 is an N6-(pyridoxal phosphate)lysine (Lys252). Residues Trp286 and Asn314 each coordinate pyridoxal 5'-phosphate.

This sequence belongs to the kynureninase family. As to quaternary structure, homodimer. It depends on pyridoxal 5'-phosphate as a cofactor.

It is found in the cytoplasm. It localises to the nucleus. It carries out the reaction L-kynurenine + H2O = anthranilate + L-alanine + H(+). The enzyme catalyses 3-hydroxy-L-kynurenine + H2O = 3-hydroxyanthranilate + L-alanine + H(+). It participates in amino-acid degradation; L-kynurenine degradation; L-alanine and anthranilate from L-kynurenine: step 1/1. The protein operates within cofactor biosynthesis; NAD(+) biosynthesis; quinolinate from L-kynurenine: step 2/3. Functionally, catalyzes the cleavage of L-kynurenine (L-Kyn) and L-3-hydroxykynurenine (L-3OHKyn) into anthranilic acid (AA) and 3-hydroxyanthranilic acid (3-OHAA), respectively. In Saccharomyces cerevisiae (strain ATCC 204508 / S288c) (Baker's yeast), this protein is Kynureninase.